The sequence spans 138 residues: Acidic phospholipase A2 Tbo-E6 (138 aa).

The first 16 residues, 1–16 (MRTLWILAVLLLGVKG), serve as a signal peptide directing secretion. Cystine bridges form between Cys42/Cys131, Cys44/Cys60, Cys59/Cys111, Cys65/Cys138, Cys66/Cys104, Cys73/Cys97, and Cys91/Cys102. Ca(2+) contacts are provided by Tyr43, Gly45, and Gly47. The active site involves His63. Asp64 contacts Ca(2+). The active site involves Asp105.

As to quaternary structure, monomer. The cofactor is Ca(2+). As to expression, expressed by the venom gland.

It localises to the secreted. It carries out the reaction a 1,2-diacyl-sn-glycero-3-phosphocholine + H2O = a 1-acyl-sn-glycero-3-phosphocholine + a fatty acid + H(+). Functionally, snake venom phospholipase A2 (PLA2) that impairs hemostasis. It weakly inhibits ADP-induced platelet aggregation when tested on platelet rich plasma from human and rabbit blood (15-25% of inhibition at 5-10 ug of enzyme), and dose-dependently inhibits blood coagulation, possibly by inhibiting thrombin activation. Exhibits high hydrolytic activities toward L-dipalmitoyl phosphatidylcholine. PLA2 catalyzes the calcium-dependent hydrolysis of the 2-acyl groups in 3-sn-phosphoglycerides. This chain is Acidic phospholipase A2 Tbo-E6, found in Craspedocephalus borneensis (Borneo pit viper).